The primary structure comprises 933 residues: Envelope glycoprotein B (933 aa).

An N-terminal signal peptide occupies residues 1–36 (MPRPRPRALRGSSPGWALVAAVAVGAALLMATLAVA). The span at 36–49 (AAPPGPRGPAARSP) shows a compositional bias: low complexity. The disordered stretch occupies residues 36-115 (AAPPGPRGPA…GNGTRSAARR (80 aa)). Topologically, residues 37 to 797 (APPGPRGPAA…SGVSSFLSNP (761 aa)) are virion surface. Acidic residues predominate over residues 54–69 (ASVEPVEDGDYDEYDD). 2 N-linked (GlcNAc...) asparagine; by host glycosylation sites follow: N107 and N161. 5 cysteine pairs are disulfide-bonded: C136/C596, C153/C552, C227/C291, C384/C432, and C619/C656. Involved in fusion and/or binding to host membrane stretches follow at residues 193–199 (TWQGSRY) and 278–285 (AHAGFYKT). Residues N418 and N450 are each glycosylated (N-linked (GlcNAc...) asparagine; by host). Residues N697 and N747 are each glycosylated (N-linked (GlcNAc...) asparagine; by host). Hydrophobic membrane proximal region regions lie at residues 742–795 (IDRI…SFLS) and 754–795 (LMAG…SFLS). Residues 798–818 (FGALAVGLLVLAGLVAAFFAM) traverse the membrane as a helical segment. Topologically, residues 819–933 (RYIMRLRANP…SKDDEDGADP (115 aa)) are intravirion. A Golgi targeting motif is present at residues 881 to 884 (YMTL). The short motif at 920–923 (YQPL) is the Internalization motif element.

Belongs to the herpesviridae glycoprotein B family. In terms of assembly, homotrimer; disulfide-linked. Binds to heparan sulfate proteoglycans. Interacts with gH/gL heterodimer.

The protein localises to the virion membrane. The protein resides in the host cell membrane. It localises to the host endosome membrane. Its subcellular location is the host Golgi apparatus membrane. Envelope glycoprotein that forms spikes at the surface of virion envelope. Essential for the initial attachment to heparan sulfate moieties of the host cell surface proteoglycans. Involved in fusion of viral and cellular membranes leading to virus entry into the host cell. Following initial binding to its host receptors, membrane fusion is mediated by the fusion machinery composed at least of gB and the heterodimer gH/gL. May be involved in the fusion between the virion envelope and the outer nuclear membrane during virion egress. The chain is Envelope glycoprotein B from Herpesvirus ateles type 1 (strain Lennette).